Here is a 299-residue protein sequence, read N- to C-terminus: Lymphocyte antigen 6 complex locus protein G6f (299 aa).

Positions 1–19 are cleaved as a signal peptide; it reads MAVLFLLLLFLCGLPQAET. An Ig-like V-type domain is found at 20–124; that stretch reads DSIQAIYVVL…YRYQNWRVYD (105 aa). Residues 20 to 237 are Extracellular-facing; that stretch reads DSIQAIYVVL…APSADWDVAW (218 aa). Cys37 and Cys108 form a disulfide bridge. An N-linked (GlcNAc...) asparagine glycan is attached at Asn90. A helical transmembrane segment spans residues 238–258; that stretch reads ILTLLLTVGQGFTIVVLGVML. The Cytoplasmic portion of the chain corresponds to 259 to 299; the sequence is WRQRAQGAQHRNASFPQFKPEIQVYENIHLAHLSPPAPKTR. Tyr283 carries the phosphotyrosine modification.

Homodimer; disulfide-linked. Interacts with GRB2 and GRB7 in a phosphorylation-dependent manner. Post-translationally, N-glycosylated.

Its subcellular location is the cell membrane. Functionally, may play a role in the downstream signal transduction pathways involving GRB2 and GRB7. The polypeptide is Lymphocyte antigen 6 complex locus protein G6f (LY6G6F) (Bos taurus (Bovine)).